The primary structure comprises 297 residues: 2,3,4,5-tetrahydropyridine-2,6-dicarboxylate N-succinyltransferase (297 aa).

Positions 148 and 165 each coordinate Mg(2+). Glu-181 (acyl-anhydride intermediate) is an active-site residue. Succinyl-CoA contacts are provided by residues Arg-183, Gly-198, Ser-201, Ala-224, 239 to 240 (EA), Gly-247, Lys-258, and 271 to 274 (RRDS).

The protein belongs to the type 2 tetrahydrodipicolinate N-succinyltransferase family. As to quaternary structure, homotrimer.

It is found in the cytoplasm. The enzyme catalyses (S)-2,3,4,5-tetrahydrodipicolinate + succinyl-CoA + H2O = (S)-2-succinylamino-6-oxoheptanedioate + CoA. The protein operates within amino-acid biosynthesis; L-lysine biosynthesis via DAP pathway; LL-2,6-diaminopimelate from (S)-tetrahydrodipicolinate (succinylase route): step 1/3. Functionally, catalyzes the conversion of the cyclic tetrahydrodipicolinate (THDP) into the acyclic N-succinyl-L-2-amino-6-oxopimelate using succinyl-CoA. The protein is 2,3,4,5-tetrahydropyridine-2,6-dicarboxylate N-succinyltransferase of Corynebacterium glutamicum (strain ATCC 13032 / DSM 20300 / JCM 1318 / BCRC 11384 / CCUG 27702 / LMG 3730 / NBRC 12168 / NCIMB 10025 / NRRL B-2784 / 534).